Reading from the N-terminus, the 940-residue chain is Isoleucine--tRNA ligase (940 aa).

A 'HIGH' region motif is present at residues 58-68 (PYANGDIHIGH). Glu564 serves as a coordination point for L-isoleucyl-5'-AMP. The short motif at 605–609 (KMSKS) is the 'KMSKS' region element. Lys608 lines the ATP pocket. The Zn(2+) site is built by Cys903, Cys906, Cys923, and Cys926.

This sequence belongs to the class-I aminoacyl-tRNA synthetase family. IleS type 1 subfamily. Monomer. The cofactor is Zn(2+).

The protein localises to the cytoplasm. The catalysed reaction is tRNA(Ile) + L-isoleucine + ATP = L-isoleucyl-tRNA(Ile) + AMP + diphosphate. In terms of biological role, catalyzes the attachment of isoleucine to tRNA(Ile). As IleRS can inadvertently accommodate and process structurally similar amino acids such as valine, to avoid such errors it has two additional distinct tRNA(Ile)-dependent editing activities. One activity is designated as 'pretransfer' editing and involves the hydrolysis of activated Val-AMP. The other activity is designated 'posttransfer' editing and involves deacylation of mischarged Val-tRNA(Ile). This chain is Isoleucine--tRNA ligase, found in Shewanella piezotolerans (strain WP3 / JCM 13877).